A 477-amino-acid chain; its full sequence is Bifunctional protein HldE (477 aa).

The ribokinase stretch occupies residues 1–318 (MKVNLPAFER…ENAVRGRAAT (318 aa)). Residue 195–198 (NLSE) participates in ATP binding. D264 is a catalytic residue. The interval 344–477 (MTNGVFDILH…IKKIQTESEK (134 aa)) is cytidylyltransferase.

This sequence in the N-terminal section; belongs to the carbohydrate kinase PfkB family. It in the C-terminal section; belongs to the cytidylyltransferase family. As to quaternary structure, homodimer.

It catalyses the reaction D-glycero-beta-D-manno-heptose 7-phosphate + ATP = D-glycero-beta-D-manno-heptose 1,7-bisphosphate + ADP + H(+). It carries out the reaction D-glycero-beta-D-manno-heptose 1-phosphate + ATP + H(+) = ADP-D-glycero-beta-D-manno-heptose + diphosphate. The protein operates within nucleotide-sugar biosynthesis; ADP-L-glycero-beta-D-manno-heptose biosynthesis; ADP-L-glycero-beta-D-manno-heptose from D-glycero-beta-D-manno-heptose 7-phosphate: step 1/4. It functions in the pathway nucleotide-sugar biosynthesis; ADP-L-glycero-beta-D-manno-heptose biosynthesis; ADP-L-glycero-beta-D-manno-heptose from D-glycero-beta-D-manno-heptose 7-phosphate: step 3/4. Catalyzes the phosphorylation of D-glycero-D-manno-heptose 7-phosphate at the C-1 position to selectively form D-glycero-beta-D-manno-heptose-1,7-bisphosphate. Its function is as follows. Catalyzes the ADP transfer from ATP to D-glycero-beta-D-manno-heptose 1-phosphate, yielding ADP-D-glycero-beta-D-manno-heptose. In Salmonella arizonae (strain ATCC BAA-731 / CDC346-86 / RSK2980), this protein is Bifunctional protein HldE.